Here is a 1383-residue protein sequence, read N- to C-terminus: DNA-directed RNA polymerase subunit beta'' (1383 aa).

Zn(2+) is bound by residues C220, C289, C296, and C299.

Belongs to the RNA polymerase beta' chain family. RpoC2 subfamily. As to quaternary structure, in plastids the minimal PEP RNA polymerase catalytic core is composed of four subunits: alpha, beta, beta', and beta''. When a (nuclear-encoded) sigma factor is associated with the core the holoenzyme is formed, which can initiate transcription. Zn(2+) serves as cofactor.

The protein localises to the plastid. It localises to the chloroplast. The catalysed reaction is RNA(n) + a ribonucleoside 5'-triphosphate = RNA(n+1) + diphosphate. In terms of biological role, DNA-dependent RNA polymerase catalyzes the transcription of DNA into RNA using the four ribonucleoside triphosphates as substrates. The sequence is that of DNA-directed RNA polymerase subunit beta'' from Oenothera parviflora (Small-flowered evening primrose).